We begin with the raw amino-acid sequence, 279 residues long: Lactose operon transcription activator (279 aa).

An HTH araC/xylS-type domain is found at 174 to 272 (QHAVDFINTN…EISASEYRHH (99 aa)). DNA-binding regions (H-T-H motif) lie at residues 191–212 (EDVAKSVNITRSHLYKLFKKNL) and 239–262 (ISDISRQVGYKDPLLFSKNFTKHF).

Functionally, transcriptional regulator of the lacPH genes for lactose utilization. This Staphylococcus xylosus protein is Lactose operon transcription activator (lacR).